Reading from the N-terminus, the 1481-residue chain is DNA-directed RNA polymerase subunit beta'' (1481 aa).

Zn(2+) is bound by residues cysteine 217, cysteine 291, cysteine 298, and cysteine 301.

It belongs to the RNA polymerase beta' chain family. RpoC2 subfamily. In terms of assembly, in plastids the minimal PEP RNA polymerase catalytic core is composed of four subunits: alpha, beta, beta', and beta''. When a (nuclear-encoded) sigma factor is associated with the core the holoenzyme is formed, which can initiate transcription. Zn(2+) is required as a cofactor.

The protein resides in the plastid. It localises to the chloroplast. The catalysed reaction is RNA(n) + a ribonucleoside 5'-triphosphate = RNA(n+1) + diphosphate. In terms of biological role, DNA-dependent RNA polymerase catalyzes the transcription of DNA into RNA using the four ribonucleoside triphosphates as substrates. This chain is DNA-directed RNA polymerase subunit beta'', found in Trieres chinensis (Marine centric diatom).